Consider the following 419-residue polypeptide: Hyaluronan synthase (419 aa).

5 helical membrane-spanning segments follow: residues 8-28 (LIVL…MYLF), 33-53 (VGIY…LSFL), 318-338 (IVAL…VAIG), 345-365 (AIQL…IVAL), and 376-396 (PASF…LQPL).

Belongs to the NodC/HAS family. It depends on Mg(2+) as a cofactor.

Its subcellular location is the cell membrane. It carries out the reaction [hyaluronan](n) + UDP-N-acetyl-alpha-D-glucosamine = N-acetyl-beta-D-glucosaminyl-(1-&gt;4)-[hyaluronan](n) + UDP + H(+). The enzyme catalyses N-acetyl-beta-D-glucosaminyl-(1-&gt;4)-[hyaluronan](n) + UDP-alpha-D-glucuronate = [hyaluronan](n+1) + UDP + H(+). It participates in glycan biosynthesis; hyaluronan biosynthesis. In terms of biological role, glycosaminoglycan synthesis. The hyaluronic acid capsule is involved in the pathogenicity of group A Streptococci; it may be the major virulence determinant. This is Hyaluronan synthase (hasA) from Streptococcus pyogenes serotype M18 (strain MGAS8232).